Consider the following 7913-residue polypeptide: Nonribosomal peptide synthetase dtxS1 (7913 aa).

The segment at 263–662 is adenylation 1; it reads FEQRSRAHPN…GRNDNQVKIR (400 aa). The Carrier 1 domain maps to 789 to 865; it reads QPLSEVEKQV…NVAGQARRTT (77 aa). At S826 the chain carries O-(pantetheine 4'-phosphoryl)serine. Residues 903-1171 form a condensation 1 region; sequence QDAFPCTSLQ…ITTVPVRIRL (269 aa). The segment at 1332-1740 is adenylation 2; it reads LETQAHSRPD…GRKDAQVKIR (409 aa). The 77-residue stretch at 1865–1941 folds into the Carrier 2 domain; sequence QPRTKLERQL…NLAQATGTQG (77 aa). S1902 carries the O-(pantetheine 4'-phosphoryl)serine modification. The segment at 1965-2249 is condensation 2; the sequence is PAQLSPIQRL…FSTIFPVRVS (285 aa). The interval 2863 to 3255 is adenylation 3; sequence LAQPHEPAIC…ARKDAQIKIR (393 aa). The 77-residue stretch at 3380–3456 folds into the Carrier 3 domain; the sequence is QPLSEAERKM…NVTHQAVAQL (77 aa). O-(pantetheine 4'-phosphoryl)serine is present on S3417. The condensation 3 stretch occupies residues 3496–3761; it reads DAFPCTPLQE…FATLPLRVRL (266 aa). The interval 3924 to 4321 is adenylation 4; the sequence is DRVRIHPNAP…GRKDDQVKLR (398 aa). A compositionally biased stretch (polar residues) spans 4439–4450; that stretch reads ELAQARTAQQGP. A disordered region spans residues 4439 to 4459; that stretch reads ELAQARTAQQGPKRQPASEAE. Residues 4453–4529 enclose the Carrier 4 domain; it reads QPASEAERQM…EAATQAQMLG (77 aa). Residue S4490 is modified to O-(pantetheine 4'-phosphoryl)serine. The tract at residues 4545-4837 is condensation 4; it reads QSFAQARLWF…VNMQCLRVKI (293 aa). Residues 5006–5405 form an adenylation 5 region; sequence FRQQVAACAD…RRMDAQVKIR (400 aa). One can recognise a Carrier 5 domain in the interval 5933-6009; that stretch reads QPTSKTQRQL…DMAEGLPLAK (77 aa). The residue at position 5970 (S5970) is an O-(pantetheine 4'-phosphoryl)serine. The tract at residues 6023–6315 is condensation 5; the sequence is VEQSFAQRRL…VNMQCIRIRV (293 aa). Residues 6481 to 6766 are adenylation 6; it reads FRQQALLNPD…IINAYGPTEN (286 aa). The 77-residue stretch at 7394-7470 folds into the Carrier 6 domain; that stretch reads QPTTDMEREM…DLACHLSPEE (77 aa). S7431 carries the post-translational modification O-(pantetheine 4'-phosphoryl)serine. Positions 7501–7771 are condensation 6; the sequence is EDVLPLTSFQ…CLNIVPIRVN (271 aa).

This sequence belongs to the NRP synthetase family.

The protein operates within secondary metabolite biosynthesis. Nonribosomal peptide synthetase; part of the gene cluster that mediates the biosynthesis of destruxins, insecticidal cyclic hexadepsipeptides which induce flaccid paralysis and visceral muscle contraction in insects through targeting the calcium channels and vacuolar-type ATPases. The aldo-keto reductase dtxS3 converts alpha-ketoisocaproic acid from deaminated leucine into alpha-hydroxyisocaproic acid (HIC), which is the first substrate for destruxin assembly by dtxS1. L-aspartate decarboxylase dtxS4 converts aspartic acid into beta-alanine, the last substrate for the destruxin assembly line performed by dtxS1. The nonribosomal peptide synthetase dtxS1 synthesizes destruxins B and B2, whereas the cytochrome P450 monooxygenase dtxS2 is required to convert destruxin B into other destruxin derivatives, including destructins C, D, A and E. Destruxin E-diol (ED) is further produced in a non-enzymatic manner from destruxin E. Destruxins play an important role in virulence and escape from insect host immune defenses. The protein is Nonribosomal peptide synthetase dtxS1 of Metarhizium robertsii (strain ARSEF 23 / ATCC MYA-3075) (Metarhizium anisopliae (strain ARSEF 23)).